A 242-amino-acid chain; its full sequence is Probable septum site-determining protein MinC (242 aa).

The protein belongs to the MinC family. As to quaternary structure, interacts with MinD and FtsZ.

Cell division inhibitor that blocks the formation of polar Z ring septums. Rapidly oscillates between the poles of the cell to destabilize FtsZ filaments that have formed before they mature into polar Z rings. Prevents FtsZ polymerization. The polypeptide is Probable septum site-determining protein MinC (Brucella anthropi (strain ATCC 49188 / DSM 6882 / CCUG 24695 / JCM 21032 / LMG 3331 / NBRC 15819 / NCTC 12168 / Alc 37) (Ochrobactrum anthropi)).